A 329-amino-acid chain; its full sequence is 31 kDa immunogenic protein (329 aa).

Residues 1–28 (MKFGSKIRRLAVAAVAGAIALGASFAVA) form the signal peptide.

This is 31 kDa immunogenic protein (bcsP31) from Brucella abortus biovar 1 (strain 9-941).